A 43-amino-acid polypeptide reads, in one-letter code: uncharacterized protein (43 aa).

The chain crosses the membrane as a helical span at residues 21–41 (SSFALIVVLFILLIIVGAAIF).

The protein belongs to the SscA family.

It localises to the membrane. This is an uncharacterized protein from Bacillus subtilis (strain 168).